Here is a 428-residue protein sequence, read N- to C-terminus: Glutamate-1-semialdehyde 2,1-aminomutase (428 aa).

N6-(pyridoxal phosphate)lysine is present on Lys265.

This sequence belongs to the class-III pyridoxal-phosphate-dependent aminotransferase family. HemL subfamily. In terms of assembly, homodimer. Requires pyridoxal 5'-phosphate as cofactor.

It is found in the cytoplasm. The enzyme catalyses (S)-4-amino-5-oxopentanoate = 5-aminolevulinate. It participates in porphyrin-containing compound metabolism; protoporphyrin-IX biosynthesis; 5-aminolevulinate from L-glutamyl-tRNA(Glu): step 2/2. In Ruthia magnifica subsp. Calyptogena magnifica, this protein is Glutamate-1-semialdehyde 2,1-aminomutase.